A 165-amino-acid chain; its full sequence is Cyclic pyranopterin monophosphate synthase (165 aa).

Substrate contacts are provided by residues 76-78 (MCH) and 113-114 (IE). Asp128 is a catalytic residue.

Belongs to the MoaC family. Homohexamer; trimer of dimers.

It carries out the reaction (8S)-3',8-cyclo-7,8-dihydroguanosine 5'-triphosphate = cyclic pyranopterin phosphate + diphosphate. It participates in cofactor biosynthesis; molybdopterin biosynthesis. Catalyzes the conversion of (8S)-3',8-cyclo-7,8-dihydroguanosine 5'-triphosphate to cyclic pyranopterin monophosphate (cPMP). The polypeptide is Cyclic pyranopterin monophosphate synthase (Limosilactobacillus fermentum (strain NBRC 3956 / LMG 18251) (Lactobacillus fermentum)).